The chain runs to 51 residues: Sperm protamine P1 (51 aa).

This sequence belongs to the protamine P1 family. Cross-linked by interchain disulfide bonds around the DNA-helix. Testis.

The protein resides in the nucleus. It localises to the chromosome. In terms of biological role, protamines substitute for histones in the chromatin of sperm during the haploid phase of spermatogenesis. They compact sperm DNA into a highly condensed, stable and inactive complex. In Hylobates lar (Lar gibbon), this protein is Sperm protamine P1 (PRM1).